The chain runs to 1128 residues: Mastermind-like protein 2 (1128 aa).

Disordered stretches follow at residues 1-22 (MGDTAPPQAPTGGLGGAPGAGL) and 81-167 (QHGQ…GDQR). Over residues 12–22 (GGLGGAPGAGL) the composition is skewed to gly residues. Residues 113 to 122 (PTASQTAAPA) are compositionally biased toward low complexity. At serine 177 the chain carries Phosphoserine. Disordered stretches follow at residues 343 to 509 (FNID…GSNQ), 521 to 649 (SPSA…SNQP), 677 to 714 (QVSQQHRQDQHSVVGQNAGPSPSPNPCSNPNTGSGYMN), 758 to 794 (QDQINRHLTRPPPDYKDQRRNVGNMQPTAQYSGGSST), and 1039 to 1073 (GTGLSQSRTVSQPPSLAAGGFPSPNQSSRAFQGTD). Composition is skewed to polar residues over residues 347–357 (LGQQSQRSTPR) and 374–387 (GLTQGPSGSPQLRP). A compositionally biased stretch (low complexity) spans 395–426 (SMASSGLSASSPIPSVPQSQAQPPPATGAARA). Polar residues predominate over residues 431–446 (QEVSHAQQLKQIAANR). Low complexity-rich tracts occupy residues 453–473 (HQQQQQHQPTSWPALPSSAGP) and 484–497 (PSPSFGQQPFSPQS). Residues 566–584 (NSDQANQQMPSVLPSQSKP) show a composition bias toward polar residues. The span at 590–649 (TQQQPQQSSITVQPQQQQQQPQQQQQPQQQQQPQPQQQQQQQPQAQQPAAQPTQPLSNQP) shows a compositional bias: low complexity. Composition is skewed to polar residues over residues 677-695 (QVSQQHRQDQHSVVGQNAG), 778-794 (NVGNMQPTAQYSGGSST), and 1039-1052 (GTGLSQSRTVSQPP).

It belongs to the mastermind family. In terms of assembly, interacts through its N-terminal region with the ankyrin repeat region of the Notch proteins NOTCH1, NOTCH2, NOTCH3 and NOTCH4. Forms a DNA-binding complex with Notch proteins and RBPSUH/RBP-J kappa.

It is found in the nucleus speckle. Functionally, acts as a transcriptional coactivator for NOTCH proteins. Has been shown to amplify NOTCH-induced transcription of HES1. Potentiates activation by NOTCH3 and NOTCH4 more efficiently than MAML1 or MAML3. This is Mastermind-like protein 2 (MAML2) from Bos taurus (Bovine).